The primary structure comprises 309 residues: Putative taste receptor type 2 member 33 (309 aa).

Met1 is a topological domain (extracellular). The chain crosses the membrane as a helical span at residues Val2–Phe22. Over Ser23–Gln46 the chain is Cytoplasmic. The helical transmembrane segment at Ile47–Tyr67 threads the bilayer. Residues Ala68–Asn86 lie on the Extracellular side of the membrane. The N-linked (GlcNAc...) asparagine glycan is linked to Asn86. Residues Ile87–Leu107 traverse the membrane as a helical segment. The Cytoplasmic portion of the chain corresponds to Leu108–Ser127. The helical transmembrane segment at Val128–Thr148 threads the bilayer. Residues Met149–Thr181 are Extracellular-facing. N-linked (GlcNAc...) asparagine glycosylation occurs at Asn161. A helical membrane pass occupies residues Leu182–Leu202. Topologically, residues Cys203–Gln229 are cytoplasmic. The helical transmembrane segment at Thr230–Trp250 threads the bilayer. Over Asn251–Pro259 the chain is Extracellular. A helical transmembrane segment spans residues Val260–Ile280. Over Trp281 to Pro309 the chain is Cytoplasmic.

The protein belongs to the G-protein coupled receptor T2R family.

It is found in the membrane. Putative taste receptor which may play a role in the perception of bitterness. The polypeptide is Putative taste receptor type 2 member 33 (Homo sapiens (Human)).